Here is a 561-residue protein sequence, read N- to C-terminus: 3beta-hydroxysteroid-dehydrogenase/decarboxylase isoform 3 (561 aa).

NAD(+) is bound at residue lysine 166. The region spanning 379 to 561 (VADILLWRNE…SDASSKPMFM (183 aa)) is the Reticulon domain. 3 helical membrane passes run 392-412 (FVSF…GNTF), 420-440 (LFIF…IFGF), and 504-524 (SLAA…FIYE).

This sequence belongs to the 3-beta-HSD family.

The protein localises to the endoplasmic reticulum membrane. It carries out the reaction a 3beta-hydroxysteroid-4alpha-carboxylate + NADP(+) = a 3-oxosteroid + CO2 + NADPH. It catalyses the reaction a 3beta-hydroxysteroid-4alpha-carboxylate + NAD(+) = a 3-oxosteroid + CO2 + NADH. Its pathway is steroid biosynthesis; zymosterol biosynthesis; zymosterol from lanosterol: step 4/6. This is 3beta-hydroxysteroid-dehydrogenase/decarboxylase isoform 3 (3BETAHSD/D3) from Arabidopsis thaliana (Mouse-ear cress).